Reading from the N-terminus, the 180-residue chain is Large ribosomal subunit protein uL5 (180 aa).

Belongs to the universal ribosomal protein uL5 family. In terms of assembly, part of the 50S ribosomal subunit; part of the 5S rRNA/L5/L18/L25 subcomplex. Contacts the 5S rRNA and the P site tRNA. Forms a bridge to the 30S subunit in the 70S ribosome.

Its function is as follows. This is one of the proteins that bind and probably mediate the attachment of the 5S RNA into the large ribosomal subunit, where it forms part of the central protuberance. In the 70S ribosome it contacts protein S13 of the 30S subunit (bridge B1b), connecting the 2 subunits; this bridge is implicated in subunit movement. Contacts the P site tRNA; the 5S rRNA and some of its associated proteins might help stabilize positioning of ribosome-bound tRNAs. The polypeptide is Large ribosomal subunit protein uL5 (Chloroflexus aurantiacus (strain ATCC 29364 / DSM 637 / Y-400-fl)).